We begin with the raw amino-acid sequence, 352 residues long: Aromatic amino acid aminotransferase (352 aa).

An N6-(pyridoxal phosphate)lysine modification is found at Lys-217.

Belongs to the class-II pyridoxal-phosphate-dependent aminotransferase family. Homodimer. The cofactor is pyridoxal 5'-phosphate.

The enzyme catalyses an aromatic L-alpha-amino acid + 2-oxoglutarate = an aromatic oxo-acid + L-glutamate. In terms of biological role, aminotransferase that catalyzes the conversion of aromatic amino acids and 2-oxoglutarate into corresponding aromatic oxo acids and L-glutamate. This chain is Aromatic amino acid aminotransferase, found in Cutibacterium acnes (strain DSM 16379 / KPA171202) (Propionibacterium acnes).